A 459-amino-acid chain; its full sequence is Mycothione reductase (459 aa).

Glu-31 to Cys-39 is an FAD binding site. A disulfide bond links Cys-39 and Cys-44. His-444 serves as the catalytic Proton acceptor.

It belongs to the class-I pyridine nucleotide-disulfide oxidoreductase family. In terms of assembly, homodimer. FAD serves as cofactor.

It catalyses the reaction 2 mycothiol + NADP(+) = mycothione + NADPH + H(+). The enzyme catalyses 2 mycothiol + NAD(+) = mycothione + NADH + H(+). In terms of biological role, catalyzes the NAD(P)H-dependent reduction of mycothione (the oxidized disulfide form of mycothiol) to mycothiol. The protein is Mycothione reductase (mtr) of Mycobacterium tuberculosis (strain CDC 1551 / Oshkosh).